A 585-amino-acid chain; its full sequence is DNA ligase (585 aa).

Residue Glu-278 participates in ATP binding. Lys-280 (N6-AMP-lysine intermediate) is an active-site residue. Residues Arg-285, Arg-301, Glu-330, Phe-370, Arg-444, and Lys-450 each contribute to the ATP site.

The protein belongs to the ATP-dependent DNA ligase family. Mg(2+) is required as a cofactor.

The enzyme catalyses ATP + (deoxyribonucleotide)n-3'-hydroxyl + 5'-phospho-(deoxyribonucleotide)m = (deoxyribonucleotide)n+m + AMP + diphosphate.. Its function is as follows. DNA ligase that seals nicks in double-stranded DNA during DNA replication, DNA recombination and DNA repair. This chain is DNA ligase, found in Haloferax volcanii (strain ATCC 29605 / DSM 3757 / JCM 8879 / NBRC 14742 / NCIMB 2012 / VKM B-1768 / DS2) (Halobacterium volcanii).